A 44-amino-acid chain; its full sequence is YADAIFTNSYRKVLGQLSARKLLQDIMNRQQGERNQEQGAKVRL.

L44 is modified (leucine amide).

The protein belongs to the glucagon family.

The protein localises to the secreted. Its function is as follows. GRF is released by the hypothalamus and acts on the adenohypophyse to stimulate the secretion of growth hormone. This is Somatoliberin (GHRH) from Capra hircus (Goat).